We begin with the raw amino-acid sequence, 583 residues long: MSEKLDKEDVLYKKRHSIAHVMAEAVIELFPNTKIAIGPPIKDGFYYDFDFEKHIIEDDLLLIEQKMREILKTGSSFVKEVITKEQALMLFKDEPYKIDLIHELDIADEISIYKSHNFTDLCKGPHIDNMGKIDPKAFKLISIAGAYWRGDEKNKMLTRIYGTLWNNEKDLKAYLKLREEIKRRDHRKLGRELDLFSVHEEIGPGLIFFHPSGARIRALIEDFWREEHFKNGYDILFTPHVGKSWLWETSGHLDFYKESMFEKMEMDKSNYYVKPMNCPFHIAIYNTGRHSYRDLPFRWAELGTVYRYEKVGALHGTMRVRGFTQDDAHIICTYDQVKFEVQEVLRFALYMWNKFGFTALKAYLSTKPEKSVGDEDDWIMSVKVLKEALINLGIDYDIDEGGGAFYGPKIDLKIIDSLGREWQMSTIQFDFNLPARFKMTYTAEDGKERQPFMIHRALLGSIERFFGILVEHYGGAFPVWLAPLQVVIIPVNNIVEEYALEVLSRFKKEGIRIKLDNDCNMRMNAKIRQYQSQKVPYMFIVGEKEVVEGKISIRTRTNEQINGLELKEALEFVKLKVSNKEIL.

The catalytic stretch occupies residues 185–478 (DHRKLGRELD…LVEHYGGAFP (294 aa)). Zn(2+) is bound by residues C278, H329, and H455.

This sequence belongs to the class-II aminoacyl-tRNA synthetase family. Homodimer. Zn(2+) is required as a cofactor.

The protein resides in the cytoplasm. The catalysed reaction is tRNA(Thr) + L-threonine + ATP = L-threonyl-tRNA(Thr) + AMP + diphosphate + H(+). In terms of biological role, catalyzes the attachment of threonine to tRNA(Thr) in a two-step reaction: L-threonine is first activated by ATP to form Thr-AMP and then transferred to the acceptor end of tRNA(Thr). Also edits incorrectly charged L-seryl-tRNA(Thr). This chain is Threonine--tRNA ligase, found in Borrelia turicatae (strain 91E135).